The following is a 623-amino-acid chain: MNRYTTMRQLGDGTYGSVLMGKSNESGELVAIKRMKRKFYSWDECMNLREVKSLKKLNHANVIKLKEVIRENDHLYFIFEYMKENLYQLMKDRNKLFPESVIRNIMYQILQGLAFIHKHGFFHRDMKPENLLCMGPELVKIADFGLARELRSQPPYTDYVSTRWYRAPEVLLRSSVYSSPIDVWAVGSIMAELYMLRPLFPGTSEVDEIFKICQVLGTPKKSDWPEGYQLASSMNFRFPQCVPINLKTLIPNASNEAIQLMTEMLNWDPKKRPTASQALKHPYFQVGQVLGPSSNHLESKQSLNKQLQPLESKPSLVEVEPKPLPDIIDQVVGQPQPKTSQQPLQPIQPPQNLSVQQPPKQQSQEKPPQTLFPSIVKNMPTKPNGTLSHKSGRRRWGQTIFKSGDSWEELEDYDFGASHSKKPSMGVFKEKRKKDSPFRLPEPVPSGSNHSTGENKSLPAVTSLKSDSELSTAPTSKQYYLKQSRYLPGVNPKKVSLIASGKEINPHTWSNQLFPKSLGPVGAELAFKRSNAGNLGSYATYNQSGYIPSFLKKEVQSAGQRIHLAPLNATASEYTWNTKTGRGQFSGRTYNPTAKNLNIVNRAQPIPSVHGRTDWVAKYGGHR.

In terms of domain architecture, Protein kinase spans 4 to 284; that stretch reads YTTMRQLGDG…ASQALKHPYF (281 aa). Residues 10–18 and Lys-33 each bind ATP; that span reads LGDGTYGSV. The active-site Proton acceptor is Asp-125. Thr-157 is modified (phosphothreonine; by autocatalysis). A Phosphotyrosine; by autocatalysis modification is found at Tyr-159. Disordered regions lie at residues 328 to 396 and 416 to 469; these read IDQV…RRRW and GASH…SDSE. Positions 356–369 are enriched in low complexity; the sequence is QQPPKQQSQEKPPQ. Residues 446–455 are compositionally biased toward polar residues; the sequence is SGSNHSTGEN.

The protein belongs to the protein kinase superfamily. CMGC Ser/Thr protein kinase family. CDC2/CDKX subfamily. In terms of assembly, interacts with RP1. Interacts with AR and CDK20. Found in a complex containing MAK, AR and NCOA3. Interacts with FZR1 (via WD repeats). Mg(2+) is required as a cofactor. In terms of processing, autophosphorylated. Phosphorylated on serine and threonine residues. In terms of tissue distribution, expressed in prostate cancer cell lines at generally higher levels than in normal prostate epithelial cell lines. Isoform 1 is expressed in kidney, testis, lung, trachea, and retina. Isoform 2 is retina-specific where it is expressed in rod and cone photoreceptors.

Its subcellular location is the nucleus. The protein resides in the cytoplasm. It localises to the cytoskeleton. It is found in the microtubule organizing center. The protein localises to the centrosome. Its subcellular location is the spindle. The protein resides in the midbody. It localises to the cell projection. It is found in the cilium. The protein localises to the photoreceptor outer segment. Its subcellular location is the photoreceptor inner segment. It catalyses the reaction L-seryl-[protein] + ATP = O-phospho-L-seryl-[protein] + ADP + H(+). The enzyme catalyses L-threonyl-[protein] + ATP = O-phospho-L-threonyl-[protein] + ADP + H(+). Its function is as follows. Essential for the regulation of ciliary length and required for the long-term survival of photoreceptors. Phosphorylates FZR1 in a cell cycle-dependent manner. Plays a role in the transcriptional coactivation of AR. Could play an important function in spermatogenesis. May play a role in chromosomal stability in prostate cancer cells. The polypeptide is Serine/threonine-protein kinase MAK (MAK) (Homo sapiens (Human)).